We begin with the raw amino-acid sequence, 270 residues long: 4-hydroxy-tetrahydrodipicolinate reductase (270 aa).

7–12 contacts NAD(+); it reads GANGRM. Position 34 (arginine 34) interacts with NADP(+). Residues 97 to 99 and 121 to 124 each bind NAD(+); these read GTT and SGNM. The active-site Proton donor/acceptor is the histidine 155. Residue histidine 156 participates in (S)-2,3,4,5-tetrahydrodipicolinate binding. Residue lysine 159 is the Proton donor of the active site. A (S)-2,3,4,5-tetrahydrodipicolinate-binding site is contributed by 165-166; sequence GT.

The protein belongs to the DapB family.

The protein localises to the cytoplasm. It carries out the reaction (S)-2,3,4,5-tetrahydrodipicolinate + NAD(+) + H2O = (2S,4S)-4-hydroxy-2,3,4,5-tetrahydrodipicolinate + NADH + H(+). The catalysed reaction is (S)-2,3,4,5-tetrahydrodipicolinate + NADP(+) + H2O = (2S,4S)-4-hydroxy-2,3,4,5-tetrahydrodipicolinate + NADPH + H(+). Its pathway is amino-acid biosynthesis; L-lysine biosynthesis via DAP pathway; (S)-tetrahydrodipicolinate from L-aspartate: step 4/4. In terms of biological role, catalyzes the conversion of 4-hydroxy-tetrahydrodipicolinate (HTPA) to tetrahydrodipicolinate. In Bartonella tribocorum (strain CIP 105476 / IBS 506), this protein is 4-hydroxy-tetrahydrodipicolinate reductase.